We begin with the raw amino-acid sequence, 225 residues long: Glutathione S-transferase Mu 3 (225 aa).

The region spanning 5 to 92 (SSMVLGYWDI…YIARKHNMCG (88 aa)) is the GST N-terminal domain. Glutathione contacts are provided by residues 11–12 (YW), 50–54 (WLDVK), and 63–64 (NL). Residue Lys-54 forms a Glycyl lysine isopeptide (Lys-Gly) (interchain with G-Cter in SUMO2) linkage. A Glycyl lysine isopeptide (Lys-Gly) (interchain with G-Cter in SUMO2) cross-link involves residue Lys-73. 76 to 77 (QS) provides a ligand contact to glutathione. The region spanning 94 to 212 (TEEEKIRVDI…QSDQFCKMPI (119 aa)) is the GST C-terminal domain. Tyr-120 is a binding site for substrate.

The protein belongs to the GST superfamily. Mu family. In terms of assembly, homodimer. In terms of processing, the N-terminus is blocked. In terms of tissue distribution, testis and brain.

Its subcellular location is the cytoplasm. The catalysed reaction is RX + glutathione = an S-substituted glutathione + a halide anion + H(+). Its function is as follows. Conjugation of reduced glutathione to a wide number of exogenous and endogenous hydrophobic electrophiles. May govern uptake and detoxification of both endogenous compounds and xenobiotics at the testis and brain blood barriers. This chain is Glutathione S-transferase Mu 3 (GSTM3), found in Homo sapiens (Human).